The primary structure comprises 220 residues: GTP-binding protein YPT53 (220 aa).

GTP is bound by residues 19 to 26, 67 to 71, and 125 to 128; these read GESAVGKS, DTAGQ, and NKMD. Residues cysteine 218 and cysteine 220 are each lipidated (S-geranylgeranyl cysteine). Position 220 is a cysteine methyl ester (cysteine 220).

The protein belongs to the small GTPase superfamily. Rab family.

It is found in the cell membrane. Its function is as follows. Required for transport in the endocytic pathway and for correct sorting of the vacuolar hydrolases suggesting a possible intersection of the endocytic with the vacuolar sorting pathway. May be involved in recruiting the MON1-CCZ1 complex to membranes enriched in phosphatidylinositol 3-phosphate (PtdIns[3]P) or other charged lipids, leading to recruitment of YPT7. The chain is GTP-binding protein YPT53 (YPT53) from Saccharomyces cerevisiae (strain ATCC 204508 / S288c) (Baker's yeast).